The following is a 391-amino-acid chain: Paired box protein Pax-5 (391 aa).

A DNA-binding region (paired) is located at residues G16–K142. A PAI subdomain region spans residues G19–T75. The tract at residues K94–K142 is RED subdomain. The segment at S182–D218 is disordered.

Interacts with ETS1; this interaction alters PAX5 DNA-binding properties. Binds DNA as a monomer. Interacts with TBP; this interaction allows PAX5 to interact with the basal transcription machinery. Interacts with RB1. Interacts with TLE4. Interacts with DAXX. In terms of processing, O-glycosylated. Phosphorylated by SYK. This phosphorylation plays an important role in the abolition of BLIMP1 repression by PAX5 in order to trigger plasma cell differentiation. Expressed in all B-lymphoid organs, in the embryonic midbrain and in adult testis.

It is found in the nucleus. Functionally, transcription factor that plays an essential role in commitment of lymphoid progenitors to the B-lymphocyte lineage. Fulfills a dual role by repressing B-lineage inappropriate genes and simultaneously activating B-lineage-specific genes. In turn, regulates cell adhesion and migration, induces V(H)-to-D(H)J(H) recombination, facilitates pre-B-cell receptor signaling and promotes development to the mature B-cell stage. Repression of the cohesin-release factor WAPL causes global changes of the chromosomal architecture in pro-B cells to facilitate the generation of a diverse antibody repertoire. The chain is Paired box protein Pax-5 (Pax5) from Mus musculus (Mouse).